The sequence spans 533 residues: Dipeptidase (533 aa).

Residue cysteine 3 is part of the active site.

The protein belongs to the peptidase C69 family.

The catalysed reaction is an L-aminoacyl-L-amino acid + H2O = 2 an L-alpha-amino acid. In terms of biological role, hydrolyzes a wide range of dipeptides. Highest activity against Ala-Gln. This Bifidobacterium longum (strain NCC 2705) protein is Dipeptidase.